A 967-amino-acid chain; its full sequence is RNA polymerase-associated protein RapA (967 aa).

The region spanning 163–333 is the Helicase ATP-binding domain; the sequence is EVGQRHAPRV…FARLRLLDPN (171 aa). 176 to 183 serves as a coordination point for ATP; it reads DEVGLGKT. A DEAH box motif is present at residues 279–282; it reads DEAH. Residues 489-677 form the Helicase C-terminal domain; the sequence is RVEWLLNYLT…TCRQQHDSLK (189 aa).

This sequence belongs to the SNF2/RAD54 helicase family. RapA subfamily. As to quaternary structure, interacts with the RNAP. Has a higher affinity for the core RNAP than for the holoenzyme. Its ATPase activity is stimulated by binding to RNAP.

Functionally, transcription regulator that activates transcription by stimulating RNA polymerase (RNAP) recycling in case of stress conditions such as supercoiled DNA or high salt concentrations. Probably acts by releasing the RNAP, when it is trapped or immobilized on tightly supercoiled DNA. Does not activate transcription on linear DNA. Probably not involved in DNA repair. This is RNA polymerase-associated protein RapA from Pectobacterium atrosepticum (strain SCRI 1043 / ATCC BAA-672) (Erwinia carotovora subsp. atroseptica).